A 371-amino-acid chain; its full sequence is Heterodimeric geranylgeranyl pyrophosphate synthase large subunit 1, chloroplastic (371 aa).

The transit peptide at 1–51 (MASVTLGSWIVVHHHNHHHPSSILTKSRSRSCPITLTKPISFRSKRTVSSS) directs the protein to the chloroplast. Serine 52 is subject to N-acetylserine. Positions 116, 119, and 148 each coordinate isopentenyl diphosphate. Mg(2+) is bound by residues aspartate 155 and aspartate 161. Position 166 (arginine 166) interacts with dimethylallyl diphosphate. Arginine 167 provides a ligand contact to isopentenyl diphosphate. Residues lysine 256, threonine 257, glutamine 294, lysine 311, and lysine 321 each contribute to the dimethylallyl diphosphate site.

This sequence belongs to the FPP/GGPP synthase family. As to quaternary structure, forms homodimers. Part of a heterodimeric geranyl(geranyl)diphosphate synthase. Interacts with GGR. Mg(2+) is required as a cofactor. In terms of tissue distribution, expressed ubiquitously.

The protein resides in the plastid. It localises to the chloroplast. It is found in the cytoplasm. The catalysed reaction is isopentenyl diphosphate + dimethylallyl diphosphate = (2E)-geranyl diphosphate + diphosphate. It catalyses the reaction isopentenyl diphosphate + (2E)-geranyl diphosphate = (2E,6E)-farnesyl diphosphate + diphosphate. The enzyme catalyses isopentenyl diphosphate + (2E,6E)-farnesyl diphosphate = (2E,6E,10E)-geranylgeranyl diphosphate + diphosphate. The protein operates within isoprenoid biosynthesis; farnesyl diphosphate biosynthesis; farnesyl diphosphate from geranyl diphosphate and isopentenyl diphosphate: step 1/1. It participates in isoprenoid biosynthesis; geranyl diphosphate biosynthesis; geranyl diphosphate from dimethylallyl diphosphate and isopentenyl diphosphate: step 1/1. Its pathway is isoprenoid biosynthesis; geranylgeranyl diphosphate biosynthesis; geranylgeranyl diphosphate from farnesyl diphosphate and isopentenyl diphosphate: step 1/1. Functionally, heterodimeric geranyl(geranyl)-diphosphate (GPP) synthase large subunit. In vitro, the large subunit catalyzes mainly the trans-addition of the three molecules of IPP onto DMAPP to form geranylgeranyl pyrophosphate while the small subunit alone is inactive. Upon association of the two subunits, the product profile changes and the production of gerany-diphosphate is strongly increased. The chain is Heterodimeric geranylgeranyl pyrophosphate synthase large subunit 1, chloroplastic (GGPPS1) from Arabidopsis thaliana (Mouse-ear cress).